The chain runs to 227 residues: Enolase-phosphatase E1 (227 aa).

The protein belongs to the HAD-like hydrolase superfamily. MasA/MtnC family. As to quaternary structure, monomer. Mg(2+) is required as a cofactor.

It carries out the reaction 5-methylsulfanyl-2,3-dioxopentyl phosphate + H2O = 1,2-dihydroxy-5-(methylsulfanyl)pent-1-en-3-one + phosphate. It functions in the pathway amino-acid biosynthesis; L-methionine biosynthesis via salvage pathway; L-methionine from S-methyl-5-thio-alpha-D-ribose 1-phosphate: step 3/6. The protein operates within amino-acid biosynthesis; L-methionine biosynthesis via salvage pathway; L-methionine from S-methyl-5-thio-alpha-D-ribose 1-phosphate: step 4/6. In terms of biological role, bifunctional enzyme that catalyzes the enolization of 2,3-diketo-5-methylthiopentyl-1-phosphate (DK-MTP-1-P) into the intermediate 2-hydroxy-3-keto-5-methylthiopentenyl-1-phosphate (HK-MTPenyl-1-P), which is then dephosphorylated to form the acireductone 1,2-dihydroxy-3-keto-5-methylthiopentene (DHK-MTPene). The sequence is that of Enolase-phosphatase E1 from Pseudomonas fluorescens (strain Pf0-1).